Here is a 116-residue protein sequence, read N- to C-terminus: Large ribosomal subunit protein uL18 (116 aa).

Belongs to the universal ribosomal protein uL18 family. As to quaternary structure, part of the 50S ribosomal subunit; part of the 5S rRNA/L5/L18/L25 subcomplex. Contacts the 5S and 23S rRNAs.

Its function is as follows. This is one of the proteins that bind and probably mediate the attachment of the 5S RNA into the large ribosomal subunit, where it forms part of the central protuberance. The polypeptide is Large ribosomal subunit protein uL18 (Shewanella loihica (strain ATCC BAA-1088 / PV-4)).